The chain runs to 279 residues: Pantothenate synthetase (279 aa).

Residue 30–37 coordinates ATP; that stretch reads MGALHAGH. Residue histidine 37 is the Proton donor of the active site. Glutamine 61 is a (R)-pantoate binding site. Residue glutamine 61 participates in beta-alanine binding. 147 to 150 serves as a coordination point for ATP; the sequence is GEKD. Glutamine 153 contributes to the (R)-pantoate binding site. Residues alanine 176 and 184-187 contribute to the ATP site; that span reads LSSR.

It belongs to the pantothenate synthetase family. In terms of assembly, homodimer.

The protein localises to the cytoplasm. It catalyses the reaction (R)-pantoate + beta-alanine + ATP = (R)-pantothenate + AMP + diphosphate + H(+). Its pathway is cofactor biosynthesis; (R)-pantothenate biosynthesis; (R)-pantothenate from (R)-pantoate and beta-alanine: step 1/1. Its function is as follows. Catalyzes the condensation of pantoate with beta-alanine in an ATP-dependent reaction via a pantoyl-adenylate intermediate. This Sphingopyxis alaskensis (strain DSM 13593 / LMG 18877 / RB2256) (Sphingomonas alaskensis) protein is Pantothenate synthetase.